Consider the following 474-residue polypeptide: Eukaryotic translation initiation factor 3 subunit L (474 aa).

The PCI domain maps to 255–449 (DAIRMFSHIL…DLDYALQGDL (195 aa)).

Belongs to the eIF-3 subunit L family. Component of the eukaryotic translation initiation factor 3 (eIF-3) complex.

It is found in the cytoplasm. Component of the eukaryotic translation initiation factor 3 (eIF-3) complex, which is involved in protein synthesis of a specialized repertoire of mRNAs and, together with other initiation factors, stimulates binding of mRNA and methionyl-tRNAi to the 40S ribosome. The eIF-3 complex specifically targets and initiates translation of a subset of mRNAs involved in cell proliferation. The sequence is that of Eukaryotic translation initiation factor 3 subunit L from Neurospora crassa (strain ATCC 24698 / 74-OR23-1A / CBS 708.71 / DSM 1257 / FGSC 987).